A 360-amino-acid polypeptide reads, in one-letter code: Nucleoporin SEH1 (360 aa).

WD repeat units lie at residues 10–49, 55–96, 111–152, 160–210, 217–258, and 276–315; these read DHKD…DWHC, THSG…SNDK, DSRT…NLSQ, SCKL…RKYA, TVTD…KELT, and NHNS…NWKC. Lysine 12 participates in a covalent cross-link: Glycyl lysine isopeptide (Lys-Gly) (interchain with G-Cter in SUMO2). Serine 179 and serine 190 each carry phosphoserine. Positions 324–354 are enriched in polar residues; the sequence is SPVNGSSQQGTSNPSLGSNIPSLQNSLNGSS. A disordered region spans residues 324-360; sequence SPVNGSSQQGTSNPSLGSNIPSLQNSLNGSSAGRKHS.

This sequence belongs to the WD repeat SEC13 family. In terms of assembly, component of the Nup107-160 subcomplex of the nuclear pore complex (NPC). The Nup107-160 subcomplex includes NUP160, NUP133, NUP107, NUP98, NUP85, NUP43, NUP37, SEH1 and SEC13. The SEH1 subunit appears to be only weakly associated with the Nup107-160 subcomplex. Component of the GATOR2 subcomplex, composed of MIOS, SEC13, SEH1L, WDR24 and WDR59. The GATOR2 complex interacts with CASTOR1 and CASTOR2; the interaction is negatively regulated by arginine. The GATOR2 complex interacts with SESN1, SESN2 and SESN3; the interaction is negatively regulated by amino acids. SESN1, SESN2 and SESN3 convey leucine availability via direct interaction with SEH1L and WDR24.

The protein localises to the chromosome. It localises to the centromere. The protein resides in the kinetochore. It is found in the nucleus. Its subcellular location is the nuclear pore complex. The protein localises to the lysosome membrane. With respect to regulation, the GATOR2 complex is negatively regulated by the upstream amino acid sensors CASTOR1 and SESN2, which sequester the GATOR2 complex in absence of amino acids. In the presence of abundant amino acids, GATOR2 is released from CASTOR1 and SESN2 and activated. Its function is as follows. Component of the Nup107-160 subcomplex of the nuclear pore complex (NPC). The Nup107-160 subcomplex is required for the assembly of a functional NPC. The Nup107-160 subcomplex is also required for normal kinetochore microtubule attachment, mitotic progression and chromosome segregation. This subunit plays a role in recruitment of the Nup107-160 subcomplex to the kinetochore. Functionally, as a component of the GATOR2 complex, functions as an activator of the amino acid-sensing branch of the mTORC1 signaling pathway. The GATOR2 complex indirectly activates mTORC1 through the inhibition of the GATOR1 subcomplex. GATOR2 probably acts as an E3 ubiquitin-protein ligase toward GATOR1. In the presence of abundant amino acids, the GATOR2 complex mediates ubiquitination of the NPRL2 core component of the GATOR1 complex, leading to GATOR1 inactivation. In the absence of amino acids, GATOR2 is inhibited, activating the GATOR1 complex. Within the GATOR2 complex, SEC13 and SEH1L are required to stabilize the complex. The chain is Nucleoporin SEH1 (SEH1L) from Pongo abelii (Sumatran orangutan).